Consider the following 445-residue polypeptide: 23S rRNA (uracil(1939)-C(5))-methyltransferase RlmD (445 aa).

The region spanning 6–64 (RRLPREPFEIAITGLSHEGRGIAHHDERTLFVHGALPGERVRAVYTKRRRSVAEARVVE) is the TRAM domain. Residues C77, C83, C86, and C165 each coordinate [4Fe-4S] cluster. Positions 274, 303, 308, 324, 351, and 372 each coordinate S-adenosyl-L-methionine. C398 serves as the catalytic Nucleophile.

The protein belongs to the class I-like SAM-binding methyltransferase superfamily. RNA M5U methyltransferase family. RlmD subfamily.

The enzyme catalyses uridine(1939) in 23S rRNA + S-adenosyl-L-methionine = 5-methyluridine(1939) in 23S rRNA + S-adenosyl-L-homocysteine + H(+). Its function is as follows. Catalyzes the formation of 5-methyl-uridine at position 1939 (m5U1939) in 23S rRNA. The sequence is that of 23S rRNA (uracil(1939)-C(5))-methyltransferase RlmD from Alkalilimnicola ehrlichii (strain ATCC BAA-1101 / DSM 17681 / MLHE-1).